The following is a 158-amino-acid chain: Protein OPG060 (158 aa).

It belongs to the orthopoxvirus OPG058 family.

In Cynomys gunnisoni (Gunnison's prairie dog), this protein is Protein OPG060 (OPG060).